The sequence spans 473 residues: UTP--glucose-1-phosphate uridylyltransferase (473 aa).

UTP is bound by residues 89-92 (LNGG), K103, Q166, and G195. 91–92 (GG) lines the substrate pocket. Residues H196 and 224-226 (NSD) contribute to the substrate site. UTP is bound by residues D226 and K364.

This sequence belongs to the UDPGP type 1 family.

The protein resides in the cytoplasm. It catalyses the reaction alpha-D-glucose 1-phosphate + UTP + H(+) = UDP-alpha-D-glucose + diphosphate. Functionally, plays a central role as a glucosyl donor in cellular metabolic pathways. This chain is UTP--glucose-1-phosphate uridylyltransferase, found in Hordeum vulgare (Barley).